A 341-amino-acid chain; its full sequence is Acetylpolyamine amidohydrolase (341 aa).

The active-site Proton donor/acceptor is H157. D192, H194, and D281 together coordinate Zn(2+).

It belongs to the histone deacetylase family. Homodimer. Zn(2+) serves as cofactor.

It carries out the reaction N-acetylputrescine + H2O = putrescine + acetate. The enzyme catalyses N-acetylcadaverine + H2O = cadaverine + acetate. The protein operates within amine and polyamine metabolism. Its function is as follows. Involved in polyamine metabolism. Catalyzes the deacetylation of various acetylated polyamines such as N-acetylputrescine and N-acetylcadaverine. This is Acetylpolyamine amidohydrolase from Burkholderia pseudomallei (strain 1710b).